A 354-amino-acid polypeptide reads, in one-letter code: Protein RecA (354 aa).

67-74 (GPESSGKT) contributes to the ATP binding site.

It belongs to the RecA family.

Its subcellular location is the cytoplasm. In terms of biological role, can catalyze the hydrolysis of ATP in the presence of single-stranded DNA, the ATP-dependent uptake of single-stranded DNA by duplex DNA, and the ATP-dependent hybridization of homologous single-stranded DNAs. It interacts with LexA causing its activation and leading to its autocatalytic cleavage. This chain is Protein RecA, found in Enterobacter agglomerans (Erwinia herbicola).